The chain runs to 634 residues: MDLLKIKDPSFMKQLDIKELEALAADIRAFLITSTSKSGGHIGPNLGVVELTIALHYTFNSPKDKFIWDVGHQSYVHKILTGRANQFDTLRKHGGLDGFPKRKESIHDVFETGHSSTSLSAACGMVIARDIKKEDFYVIPIIGDGALTGGMAFEALNHIGDMGKDMIVILNDNDMSIAPNVGALHNVLGKLRTSDKFQQTKTNIDKLIRKIPTAGEKLADTAEKTKDSLKHLLVNGTFFEELGFMYLGPIDGHNLEDILTNLEIAKRARGPVILHVVTKKGKGYQPAELDSRGTWHGTGPYKVETGSFIKSVKTAPSWSSVISNELMRLATADERIVAITPAMPVGSKLEKFAKAFPERFFDVGIAEQHATTMAAGLATQGMKPFLAIYSTFLQRAYDQLVHDVCRQKLNVVIGIDRAGLVGADGETHQGIFDISFLNSIPNMIITMPKDEVEARQLMVTAFDYDAGPFAIRYPRGNGLGVELTESNTLIPIGEWETIIQPIDAVIVTFGPTIQLALKAADQLETEGYRVGVINARFIKPLDETLLHQMIKQKIPILTVEESLLKGGFGASVLEFIETNNYTDVAIHRIGLPDEFISHGSVPVILESYGISEAGIELKIKEMLAQSEKLRAKRL.

Thiamine diphosphate-binding positions include histidine 72 and 113–115; that span reads GHS. Mg(2+) is bound at residue aspartate 144. Thiamine diphosphate-binding positions include 145 to 146, asparagine 173, tyrosine 284, and glutamate 367; that span reads GA. A Mg(2+)-binding site is contributed by asparagine 173.

Belongs to the transketolase family. DXPS subfamily. As to quaternary structure, homodimer. It depends on Mg(2+) as a cofactor. Requires thiamine diphosphate as cofactor.

The enzyme catalyses D-glyceraldehyde 3-phosphate + pyruvate + H(+) = 1-deoxy-D-xylulose 5-phosphate + CO2. It participates in metabolic intermediate biosynthesis; 1-deoxy-D-xylulose 5-phosphate biosynthesis; 1-deoxy-D-xylulose 5-phosphate from D-glyceraldehyde 3-phosphate and pyruvate: step 1/1. Its function is as follows. Catalyzes the acyloin condensation reaction between C atoms 2 and 3 of pyruvate and glyceraldehyde 3-phosphate to yield 1-deoxy-D-xylulose-5-phosphate (DXP). The protein is 1-deoxy-D-xylulose-5-phosphate synthase of Listeria welshimeri serovar 6b (strain ATCC 35897 / DSM 20650 / CCUG 15529 / CIP 8149 / NCTC 11857 / SLCC 5334 / V8).